An 87-amino-acid chain; its full sequence is DNA-directed RNA polymerase subunit omega (87 aa).

It belongs to the RNA polymerase subunit omega family. In terms of assembly, the RNAP catalytic core consists of 2 alpha, 1 beta, 1 beta' and 1 omega subunit. When a sigma factor is associated with the core the holoenzyme is formed, which can initiate transcription.

It catalyses the reaction RNA(n) + a ribonucleoside 5'-triphosphate = RNA(n+1) + diphosphate. In terms of biological role, promotes RNA polymerase assembly. Latches the N- and C-terminal regions of the beta' subunit thereby facilitating its interaction with the beta and alpha subunits. The protein is DNA-directed RNA polymerase subunit omega of Acidothermus cellulolyticus (strain ATCC 43068 / DSM 8971 / 11B).